A 188-amino-acid chain; its full sequence is Protein GrpE (188 aa).

Low complexity predominate over residues 1-22; the sequence is MEENKQNQNLNTEETTEQQTEA. Positions 1-26 are disordered; the sequence is MEENKQNQNLNTEETTEQQTEAETVE.

It belongs to the GrpE family. Homodimer.

Its subcellular location is the cytoplasm. Functionally, participates actively in the response to hyperosmotic and heat shock by preventing the aggregation of stress-denatured proteins, in association with DnaK and GrpE. It is the nucleotide exchange factor for DnaK and may function as a thermosensor. Unfolded proteins bind initially to DnaJ; upon interaction with the DnaJ-bound protein, DnaK hydrolyzes its bound ATP, resulting in the formation of a stable complex. GrpE releases ADP from DnaK; ATP binding to DnaK triggers the release of the substrate protein, thus completing the reaction cycle. Several rounds of ATP-dependent interactions between DnaJ, DnaK and GrpE are required for fully efficient folding. This Exiguobacterium sibiricum (strain DSM 17290 / CCUG 55495 / CIP 109462 / JCM 13490 / 255-15) protein is Protein GrpE.